We begin with the raw amino-acid sequence, 148 residues long: Respiratory supercomplex factor 1, mitochondrial (148 aa).

One can recognise an HIG1 domain in the interval 9 to 100 (LPSSFDAHPE…QERKQRKEFE (92 aa)). The next 2 helical transmembrane spans lie at 36–53 (PLIPIGYAATSYALWRAY) and 72–89 (IYGHAFTLFAIVAGGIYY). The stretch at 89–148 (YGQERKQRKEFEKALQEKQDQEKRDAWLRELEVRDKEDKDWRQRHAAMEMAAKEAEKKMG) forms a coiled coil.

This sequence belongs to the RCF1 family. As to quaternary structure, associates with the respiratory chain complex III/complex IV supercomplex.

It is found in the mitochondrion membrane. In terms of biological role, cytochrome c oxidase subunit which plays a role in assembly of respiratory supercomplexes. This is Respiratory supercomplex factor 1, mitochondrial (RCF1) from Ajellomyces dermatitidis (strain ER-3 / ATCC MYA-2586) (Blastomyces dermatitidis).